A 555-amino-acid polypeptide reads, in one-letter code: Membrane protein insertase YidC (555 aa).

A helical membrane pass occupies residues 7-24 (ILWVIFSMSLVLLYDNWQ). The segment at 62–81 (APGAAGTAAPAAPQAAAQPT) is disordered. Transmembrane regions (helical) follow at residues 334 to 354 (LELV…FWLL), 360 to 380 (FLGN…LVFF), 430 to 450 (LGGC…YWVL), 468 to 488 (LSVP…MFVQ), and 503 to 523 (VMMI…AGLV).

The protein belongs to the OXA1/ALB3/YidC family. Type 1 subfamily. Interacts with the Sec translocase complex via SecD. Specifically interacts with transmembrane segments of nascent integral membrane proteins during membrane integration.

Its subcellular location is the cell inner membrane. Required for the insertion and/or proper folding and/or complex formation of integral membrane proteins into the membrane. Involved in integration of membrane proteins that insert both dependently and independently of the Sec translocase complex, as well as at least some lipoproteins. Aids folding of multispanning membrane proteins. The chain is Membrane protein insertase YidC from Cupriavidus necator (strain ATCC 17699 / DSM 428 / KCTC 22496 / NCIMB 10442 / H16 / Stanier 337) (Ralstonia eutropha).